The following is a 648-amino-acid chain: DNA ligase (648 aa).

NAD(+) is bound by residues 30-34, 79-80, and Glu108; these read DEEYD and SM. Lys110 serves as the catalytic N6-AMP-lysine intermediate. The NAD(+) site is built by Arg131, Glu165, Lys280, and Lys304. Zn(2+) contacts are provided by Cys398, Cys401, Cys414, and Cys419. A BRCT domain is found at 573 to 648; it reads AKENPFKGKI…LTEDEMRAML (76 aa).

Belongs to the NAD-dependent DNA ligase family. LigA subfamily. It depends on Mg(2+) as a cofactor. The cofactor is Mn(2+).

The enzyme catalyses NAD(+) + (deoxyribonucleotide)n-3'-hydroxyl + 5'-phospho-(deoxyribonucleotide)m = (deoxyribonucleotide)n+m + AMP + beta-nicotinamide D-nucleotide.. DNA ligase that catalyzes the formation of phosphodiester linkages between 5'-phosphoryl and 3'-hydroxyl groups in double-stranded DNA using NAD as a coenzyme and as the energy source for the reaction. It is essential for DNA replication and repair of damaged DNA. This is DNA ligase from Sulfurovum sp. (strain NBC37-1).